The primary structure comprises 279 residues: Estrogen receptor beta (279 aa).

The NR LBD domain occupies 27–261 (SPEQLVLTLL…DLLLEMLNAH (235 aa)).

It belongs to the nuclear hormone receptor family. NR3 subfamily. In terms of assembly, binds DNA as a homodimer. Can form a heterodimer with ESR1. Interacts with NCOA1, NCOA3, NCOA5 and NCOA6 coactivators, leading to a strong increase of transcription of target genes. Interacts with UBE1C and AKAP13. Interacts with DNTTIP2. Interacts with CCDC62 in the presence of estradiol/E2; this interaction seems to enhance the transcription of target genes. Interacts with DNAAF4. Interacts with PRMT2. Interacts with CCAR2 (via N-terminus) in a ligand-independent manner. Interacts with RBM39, in the presence of estradiol (E2). Interacts with STUB1/CHIP.

It is found in the nucleus. Nuclear hormone receptor. Binds estrogens with an affinity similar to that of ESR1/ER-alpha, and activates expression of reporter genes containing estrogen response elements (ERE) in an estrogen-dependent manner. This chain is Estrogen receptor beta (ESR2), found in Macaca mulatta (Rhesus macaque).